Consider the following 1380-residue polypeptide: MASGRDERPPWRLGRLLLLMCLLLLGSSARAAHIKKAEATTTTTSAGAEAAEGQFDRYYHEEELESALREAAAAGLPGLARLFSIGRSVEGRPLWVLRLTAGLGSLIPEGDAGPDAAGPDAAGPLLPGRPQVKLVGNMHGDETVSRQVLIYLARELAAGYRRGDPRLVRLLNTTDVYLLPSLNPDGFERAREGDCGFGDGGPSGASGRDNSRGRDLNRSFPDQFSTGEPPALDEVPEVRALIEWIRRNKFVLSGNLHGGSVVASYPFDDSPEHKATGIYSKTSDDEVFKYLAKAYASNHPIMKTGEPHCPGDEDETFKDGITNGAHWYDVEGGMQDYNYVWANCFEITLELSCCKYPPASQLRQEWENNRESLITLIEKVHIGVKGFVKDSITGSGLENATISVAGINHNITTGRFGDFYRLLVPGTYNLTVVLTGYMPLTVTNVVVKEGPATEVDFSLRPTVTSVIPDTTEAVSTASTVAIPNILSGTSSSYQPIQPKDFHHHHFPDMEIFLRRFANEYPNITRLYSLGKSVESRELYVMEISDNPGVHEPGEPEFKYIGNMHGNEVVGRELLLNLIEYLCKNFGTDPEVTDLVHNTRIHLMPSMNPDGYEKSQEGDSISVIGRNNSNNFDLNRNFPDQFVQITDPTQPETIAVMSWMKSYPFVLSANLHGGSLVVNYPFDDDEQGLATYSKSPDDAVFQQIALSYSKENSQMFQGRPCKNMYPNEYFPHGITNGASWYNVPGGMQDWNYLQTNCFEVTIELGCVKYPLEKELPNFWEQNRRSLIQFMKQVHQGVRGFVLDATDGRGILNATISVAEINHPVTTYKTGDYWRLLVPGTYKITASARGYNPVTKNVTVKSEGAIQVNFTLVRSSTDSNNESKKGKGASSSTNDASDPTTKEFETLIKDLSAENGLESLMLRSSSNLALALYRYHSYKDLSEFLRGLVMNYPHITNLTNLGQSTEYRHIWSLEISNKPNVSEPEEPKIRFVAGIHGNAPVGTELLLALAEFLCLNYKKNPAVTQLVDRTRIVIVPSLNPDGRERAQEKDCTSKIGQTNARGKDLDTDFTNNASQPETKAIIENLIQKQDFSLSVALDGGSMLVTYPYDKPVQTVENKETLKHLASLYANNHPSMHMGQPSCPNKSDENIPGGVMRGAEWHSHLGSMKDYSVTYGHCPEITVYTSCCYFPSAARLPSLWADNKRSLLSMLVEVHKGVHGFVKDKTGKPISKAVIVLNEGIKVQTKEGGYFHVLLAPGVHNIIAIADGYQQQHSQVFVHHDAASSVVIVFDTDNRIFGLPRELVVTVSGATMSALILTACIIWCICSIKSNRHKDGFHRLRQHHDEYEDEIRMMSTGSKKSLLSHEFQDETDTEEETLYSSKH.

The first 31 residues, 1 to 31 (MASGRDERPPWRLGRLLLLMCLLLLGSSARA), serve as a signal peptide directing secretion. At 32-1299 (AHIKKAEATT…DNRIFGLPRE (1268 aa)) the chain is on the extracellular side. The 324-residue stretch at 57 to 380 (RYYHEEELES…ESLITLIEKV (324 aa)) folds into the Peptidase M14 1 domain. The Zn(2+) site is built by histidine 139 and glutamate 142. The Cell attachment site motif lies at 162–164 (RGD). A glycan (N-linked (GlcNAc...) asparagine) is linked at asparagine 172. The interval 190–232 (AREGDCGFGDGGPSGASGRDNSRGRDLNRSFPDQFSTGEPPAL) is disordered. A compositionally biased stretch (gly residues) spans 195–204 (CGFGDGGPSG). Asparagine 217 carries an N-linked (GlcNAc...) asparagine glycan. Histidine 257 contacts Zn(2+). The residue at position 265 (tyrosine 265) is a Phosphotyrosine. Serine 270 carries the post-translational modification Phosphoserine. The Proton donor/acceptor role is filled by glutamate 350. Asparagine 399, asparagine 410, asparagine 429, and asparagine 522 each carry an N-linked (GlcNAc...) asparagine glycan. Residues 502–792 (HHHHFPDMEI…RSLIQFMKQV (291 aa)) enclose the Peptidase M14 2 domain. 2 residues coordinate Zn(2+): histidine 564 and glutamate 567. Asparagine 626 carries an N-linked (GlcNAc...) asparagine glycan. Histidine 671 contributes to the Zn(2+) binding site. Glutamate 762 serves as the catalytic Proton donor/acceptor. Residues asparagine 811, asparagine 855, asparagine 867, and asparagine 879 are each glycosylated (N-linked (GlcNAc...) asparagine). Residues 874-899 (STDSNNESKKGKGASSSTNDASDPTT) form a disordered region. Positions 887–897 (ASSSTNDASDP) are enriched in polar residues. Positions 932–1211 (RYHSYKDLSE…RSLLSMLVEV (280 aa)) constitute a Peptidase M14 3 domain. Residues asparagine 955, asparagine 978, asparagine 1070, and asparagine 1142 are each glycosylated (N-linked (GlcNAc...) asparagine). A helical membrane pass occupies residues 1300-1320 (LVVTVSGATMSALILTACIIW). 3 S-palmitoyl cysteine lipidation sites follow: cysteine 1317, cysteine 1321, and cysteine 1323. Topologically, residues 1321–1380 (CICSIKSNRHKDGFHRLRQHHDEYEDEIRMMSTGSKKSLLSHEFQDETDTEEETLYSSKH) are cytoplasmic. Phosphoserine is present on residues serine 1358 and serine 1361. The tract at residues 1359–1380 (LLSHEFQDETDTEEETLYSSKH) is disordered. Residues threonine 1368 and threonine 1370 each carry the phosphothreonine modification.

It belongs to the peptidase M14 family. The cofactor is Zn(2+). Highly expressed in placenta, pancreas and hepatoma cells. Lower levels found in skeletal muscle, heart and colon carcinoma and melanoma cell lines.

It localises to the cell membrane. It catalyses the reaction Releases C-terminal Arg and Lys from polypeptides.. The protein is Carboxypeptidase D (CPD) of Homo sapiens (Human).